The sequence spans 283 residues: Bifunctional protein FolD (283 aa).

NADP(+) is bound by residues 166-168 (GAS) and I232.

This sequence belongs to the tetrahydrofolate dehydrogenase/cyclohydrolase family. In terms of assembly, homodimer.

The catalysed reaction is (6R)-5,10-methylene-5,6,7,8-tetrahydrofolate + NADP(+) = (6R)-5,10-methenyltetrahydrofolate + NADPH. It catalyses the reaction (6R)-5,10-methenyltetrahydrofolate + H2O = (6R)-10-formyltetrahydrofolate + H(+). The protein operates within one-carbon metabolism; tetrahydrofolate interconversion. Its function is as follows. Catalyzes the oxidation of 5,10-methylenetetrahydrofolate to 5,10-methenyltetrahydrofolate and then the hydrolysis of 5,10-methenyltetrahydrofolate to 10-formyltetrahydrofolate. This is Bifunctional protein FolD from Wigglesworthia glossinidia brevipalpis.